The primary structure comprises 155 residues: Protein-export protein SecB (155 aa).

It belongs to the SecB family. In terms of assembly, homotetramer, a dimer of dimers. One homotetramer interacts with 1 SecA dimer.

Its subcellular location is the cytoplasm. Its function is as follows. One of the proteins required for the normal export of preproteins out of the cell cytoplasm. It is a molecular chaperone that binds to a subset of precursor proteins, maintaining them in a translocation-competent state. It also specifically binds to its receptor SecA. This Cronobacter sakazakii (strain ATCC BAA-894) (Enterobacter sakazakii) protein is Protein-export protein SecB.